Here is a 210-residue protein sequence, read N- to C-terminus: Orotate phosphoribosyltransferase (210 aa).

5-phospho-alpha-D-ribose 1-diphosphate is bound by residues R94, K98, H100, and 120 to 128 (EDLISTGGS). Orotate is bound at residue S124.

It belongs to the purine/pyrimidine phosphoribosyltransferase family. PyrE subfamily. Homodimer. Requires Mg(2+) as cofactor.

The catalysed reaction is orotidine 5'-phosphate + diphosphate = orotate + 5-phospho-alpha-D-ribose 1-diphosphate. Its pathway is pyrimidine metabolism; UMP biosynthesis via de novo pathway; UMP from orotate: step 1/2. Its function is as follows. Catalyzes the transfer of a ribosyl phosphate group from 5-phosphoribose 1-diphosphate to orotate, leading to the formation of orotidine monophosphate (OMP). In Halalkalibacterium halodurans (strain ATCC BAA-125 / DSM 18197 / FERM 7344 / JCM 9153 / C-125) (Bacillus halodurans), this protein is Orotate phosphoribosyltransferase.